A 357-amino-acid polypeptide reads, in one-letter code: Putative electron transport protein YccM (357 aa).

At 1–36 (MAENKRTRWQRRPGTTGGKLPWNDWRNATTWRKATQ) the chain is on the cytoplasmic side. The chain crosses the membrane as a helical span at residues 37–54 (LLLLAMNIYIAITFWYWV). At 55 to 91 (RYYETASSTTFVARPGGIEGWLPIAGLMNLKYSLVTG) the chain is on the periplasmic side. The chain crosses the membrane as a helical span at residues 92 to 114 (QLPSVHAAAMLLLVAFIVISLLL). Residues 115–158 (KKAFCSWLCPVGTLSELIGDLGNKLFGRQCVLPRWLDIPLRGVK) lie on the Cytoplasmic side of the membrane. Residues 159–181 (YLLLSFFIYIALLMPAQAIHYFM) form a helical membrane-spanning segment. Residues 182-195 (LSPYSVVMDVKMLD) are Periplasmic-facing. The chain crosses the membrane as a helical span at residues 196-218 (FFRHMGTATLISVTVLLIASLFI). The Cytoplasmic segment spans residues 219–309 (RHAWCRYLCP…KPAANKKAFA (91 aa)). 2 4Fe-4S ferredoxin-type domains span residues 242 to 270 (FKIRRNAESCIDCGKCAKNCPSRIPVDKL) and 269 to 299 (KLIQVRTVECTGCMTCVESCPVASTLTFSLQ). Residues C251, C254, C257, C261, C278, C281, C284, and C288 each contribute to the [4Fe-4S] cluster site. The chain crosses the membrane as a helical span at residues 310–332 (LSGWLMTLLVLGIMFAVIGYAMY). The Periplasmic portion of the chain corresponds to 333–357 (AGVWQSPVPEELYRRLIPQAPMIGH).

It localises to the cell inner membrane. The polypeptide is Putative electron transport protein YccM (yccM) (Escherichia coli (strain K12)).